The sequence spans 125 residues: Kappa-casein (125 aa).

Residues 42–63 are disordered; it reads LPNIDPPTVERRPRPRPSFIAI. A glycan (O-linked (GalNAc...) threonine) is linked at Thr-97. Phosphoserine; alternate is present on Ser-104. Ser-104 is a glycosylation site (O-linked (GalNAc...) serine; alternate). Residue Thr-121 is glycosylated (O-linked (GalNAc...) threonine). Ser-122 is modified (phosphoserine).

Belongs to the kappa-casein family. As to expression, mammary gland specific. Secreted in milk.

It localises to the secreted. In terms of biological role, kappa-casein stabilizes micelle formation, preventing casein precipitation in milk. The chain is Kappa-casein (CSN3) from Lama guanicoe (Guanaco).